Consider the following 330-residue polypeptide: Induced myeloid leukemia cell differentiation protein Mcl-1 homolog (330 aa).

Residues 85–155 are PEST-like; that stretch reads LAVPPEEMAA…PPEEEDDELY (71 aa). A Phosphoserine modification is found at S101. A Glycyl lysine isopeptide (Lys-Gly) (interchain with G-Cter in ubiquitin) cross-link involves residue K116. The tract at residues 129–153 is disordered; that stretch reads EAAKSSGADGSLPSTPPPPEEEDDE. The residue at position 139 (S139) is a Phosphoserine; by GSK3-alpha and GSK3-beta. The residue at position 142 (S142) is a Phosphoserine. Residue T143 is modified to Phosphothreonine; by MAPK. Residues K174 and K177 each participate in a glycyl lysine isopeptide (Lys-Gly) (interchain with G-Cter in ubiquitin) cross-link. Positions 189 to 203 match the BH3 motif; it reads ALETLRRVGDGVQRN. Positions 232 to 252 match the BH1 motif; the sequence is HVFKDGVTNWGRIVTLISFGA. The BH2 signature appears at 284–299; sequence DWLVKQRGWDGFVEFF. The chain crosses the membrane as a helical span at residues 307 to 329; it reads GIRNVLLAFAGVAGVGAGLAYLI.

This sequence belongs to the Bcl-2 family. Interacts with HIF3A (via C-terminus domain). Interacts with BOK, BIK, BAX, BAK1, and TPT1. Interacts with unphosphorylated BAD. Interacts with BMF, BBC3 and PMAIP1. Interacts with BOP. Interacts with BCL2L11; may sequester BCL2L11 to prevent its pro-apoptotic activity. Interacts with GIMAP5 and HSPA8/HSC70; the interaction between HSPA8 and MCL1 is impaired in the absence of GIMAP5. Cleaved by CASP3 during apoptosis, yielding a pro-apoptotic C-terminal fragment. Post-translationally, rapidly degraded in the absence of phosphorylation in the PEST region. In terms of processing, phosphorylated on Ser-139, by GSK3, in response to IL3/interleukin-3 withdrawal. Phosphorylation at Ser-139 induces ubiquitination and proteasomal degradation, abrogating the anti-apoptotic activity. Treatment with taxol or okadaic acid induces phosphorylation on additional sites. Ubiquitinated. Ubiquitination is induced by phosphorylation at Ser-139. Deubiquitinated by USP20; leading to increased stability. In terms of tissue distribution, ubiquitous. Highly expressed in heart, spleen, lung, liver, skeletal muscle and kidney. Detected at lower levels in brain, ovary, oviduct and testis.

The protein localises to the membrane. It localises to the cytoplasm. Its subcellular location is the mitochondrion. The protein resides in the nucleus. It is found in the nucleoplasm. Functionally, involved in the regulation of apoptosis versus cell survival, and in the maintenance of viability but not of proliferation. Mediates its effects by interactions with a number of other regulators of apoptosis. The chain is Induced myeloid leukemia cell differentiation protein Mcl-1 homolog (Mcl1) from Rattus norvegicus (Rat).